Consider the following 294-residue polypeptide: Mitochondrial glycine transporter (294 aa).

Solcar repeat units lie at residues 5 to 84 (RRAT…IRQA), 102 to 186 (LNMY…MKVL), and 208 to 292 (ASTL…IVKK). 6 consecutive transmembrane segments (helical) span residues 11-36 (LIGG…TRLQ), 59-85 (GALP…RQAI), 108-133 (MFSG…VRYE), 161-184 (GFGA…DRMK), 212-238 (INGS…KTRM), and 267-285 (GISL…AWGI).

The protein belongs to the mitochondrial carrier (TC 2.A.29) family. SLC25A38 subfamily.

The protein resides in the mitochondrion inner membrane. The enzyme catalyses glycine(in) = glycine(out). Its function is as follows. Mitochondrial glycine transporter that imports glycine into the mitochondrial matrix. Plays an important role in providing glycine for the first enzymatic step in heme biosynthesis, the condensation of glycine with succinyl-CoA to produce 5-aminolevulinate (ALA) in the mitochondrial matrix. This Kluyveromyces lactis (strain ATCC 8585 / CBS 2359 / DSM 70799 / NBRC 1267 / NRRL Y-1140 / WM37) (Yeast) protein is Mitochondrial glycine transporter.